A 136-amino-acid chain; its full sequence is Large ribosomal subunit protein uL22 (136 aa).

This sequence belongs to the universal ribosomal protein uL22 family. As to quaternary structure, part of the 50S ribosomal subunit.

Functionally, this protein binds specifically to 23S rRNA; its binding is stimulated by other ribosomal proteins, e.g. L4, L17, and L20. It is important during the early stages of 50S assembly. It makes multiple contacts with different domains of the 23S rRNA in the assembled 50S subunit and ribosome. In terms of biological role, the globular domain of the protein is located near the polypeptide exit tunnel on the outside of the subunit, while an extended beta-hairpin is found that lines the wall of the exit tunnel in the center of the 70S ribosome. The polypeptide is Large ribosomal subunit protein uL22 (Leifsonia xyli subsp. xyli (strain CTCB07)).